Consider the following 58-residue polypeptide: Large ribosomal subunit protein uL30 (58 aa).

Belongs to the universal ribosomal protein uL30 family. As to quaternary structure, part of the 50S ribosomal subunit.

The polypeptide is Large ribosomal subunit protein uL30 (Buchnera aphidicola subsp. Baizongia pistaciae (strain Bp)).